The following is a 150-amino-acid chain: Putative transmembrane protein DDB_G0277665 (150 aa).

Transmembrane regions (helical) follow at residues 4 to 24 (TLIIIIVSVIVGYLISHFNIL) and 42 to 62 (VIVGAIVGQALIYFFVFFLPL).

The protein localises to the membrane. This is Putative transmembrane protein DDB_G0277665 from Dictyostelium discoideum (Social amoeba).